A 184-amino-acid polypeptide reads, in one-letter code: NADH-quinone oxidoreductase subunit B (184 aa).

Residues Cys-37, Cys-38, Cys-103, and Cys-132 each contribute to the [4Fe-4S] cluster site.

Belongs to the complex I 20 kDa subunit family. NDH-1 is composed of 14 different subunits. Subunits NuoB, C, D, E, F, and G constitute the peripheral sector of the complex. The cofactor is [4Fe-4S] cluster.

It localises to the cell membrane. It catalyses the reaction a quinone + NADH + 5 H(+)(in) = a quinol + NAD(+) + 4 H(+)(out). Its function is as follows. NDH-1 shuttles electrons from NADH, via FMN and iron-sulfur (Fe-S) centers, to quinones in the respiratory chain. The immediate electron acceptor for the enzyme in this species is believed to be a menaquinone. Couples the redox reaction to proton translocation (for every two electrons transferred, four hydrogen ions are translocated across the cytoplasmic membrane), and thus conserves the redox energy in a proton gradient. The chain is NADH-quinone oxidoreductase subunit B from Beutenbergia cavernae (strain ATCC BAA-8 / DSM 12333 / CCUG 43141 / JCM 11478 / NBRC 16432 / NCIMB 13614 / HKI 0122).